An 82-amino-acid polypeptide reads, in one-letter code: MPKKTEQPVSFESSLNELEKIVTRLESGELPLDDALNEFEHGIQLARQGQQKLQQAEQRVQILLSDDPDAPLSPFTPDNDTL.

This sequence belongs to the XseB family. Heterooligomer composed of large and small subunits.

The protein resides in the cytoplasm. The enzyme catalyses Exonucleolytic cleavage in either 5'- to 3'- or 3'- to 5'-direction to yield nucleoside 5'-phosphates.. Functionally, bidirectionally degrades single-stranded DNA into large acid-insoluble oligonucleotides, which are then degraded further into small acid-soluble oligonucleotides. This chain is Exodeoxyribonuclease 7 small subunit, found in Pectobacterium atrosepticum (strain SCRI 1043 / ATCC BAA-672) (Erwinia carotovora subsp. atroseptica).